We begin with the raw amino-acid sequence, 53 residues long: Large ribosomal subunit protein bL33 (53 aa).

The protein belongs to the bacterial ribosomal protein bL33 family.

The sequence is that of Large ribosomal subunit protein bL33 from Malacoplasma penetrans (strain HF-2) (Mycoplasma penetrans).